A 90-amino-acid polypeptide reads, in one-letter code: Arminin 45266 (90 aa).

The signal sequence occupies residues 1 to 20 (MKSASLILFVALVALTYARS). Positions 21–59 (YEDVKEEIKNEVEKEILDDLEEENDELDDNTQEVNDPRA) are excised as a propeptide. T87 carries the post-translational modification Threonine amide.

It belongs to the arminin family. Expressed in entodermal epithelium along the body column.

The protein resides in the secreted. Its subcellular location is the target cell membrane. Antimicrobial peptide with a broad-spectrum antimicrobial activity. Keeps its antibacterial activity under a wide range of salt concentrations that mimic physiological conditions of human blood, which is surprising, since Hydra is an obligate freshwater animal with nearly no salt tolerance. Does not affect red blood cells. This chain is Arminin 45266, found in Hydra vulgaris (Hydra).